Reading from the N-terminus, the 305-residue chain is uncharacterized protein (305 aa).

This is an uncharacterized protein from Methanocaldococcus jannaschii (strain ATCC 43067 / DSM 2661 / JAL-1 / JCM 10045 / NBRC 100440) (Methanococcus jannaschii).